The primary structure comprises 173 residues: DELTA-actitoxin-Oor1b (173 aa).

An N-terminal region region spans residues 6–25 (GAALGFNVHQTVLKALGQVS). Ser49, Val82, Ser100, Pro102, Tyr128, and Tyr133 together coordinate phosphocholine. Residues 100-115 (SVPFDYNLYSNWWDVK) form a trp-rich region, which is important for the binding to lipid membrane region.

It belongs to the actinoporin family. Sea anemone subfamily. Octamer or nonamer in membranes. Monomer in the soluble state.

It is found in the secreted. Its subcellular location is the nematocyst. The protein resides in the target cell membrane. Its function is as follows. Pore-forming protein that forms cations-selective hydrophilic pores of around 1 nm and causes cardiac stimulation and cytolysis. Pore formation is a multi-step process that involves specific recognition of membrane sphingomyelin (but neither cholesterol nor phosphatidylcholine) using aromatic rich region and adjacent phosphocholine (POC) binding site, firm binding to the membrane (mainly driven by hydrophobic interactions) accompanied by the transfer of the N-terminal region to the lipid-water interface and finally pore formation after oligomerization of monomers. Cytolytic effects include red blood cells hemolysis, platelet aggregation and lysis, cytotoxic and cytostatic effects on fibroblasts. Lethality in mammals has been ascribed to severe vasospasm of coronary vessels, cardiac arrhythmia, and inotropic effects. The polypeptide is DELTA-actitoxin-Oor1b (Oulactis orientalis (Japan anemone)).